Here is a 236-residue protein sequence, read N- to C-terminus: Ribose-5-phosphate isomerase A (236 aa).

Substrate is bound by residues 28–31, 83–86, and 96–99; these read TGST, DGAD, and KGGG. E105 (proton acceptor) is an active-site residue. Residue K123 coordinates substrate.

This sequence belongs to the ribose 5-phosphate isomerase family. Homodimer.

It catalyses the reaction aldehydo-D-ribose 5-phosphate = D-ribulose 5-phosphate. The protein operates within carbohydrate degradation; pentose phosphate pathway; D-ribose 5-phosphate from D-ribulose 5-phosphate (non-oxidative stage): step 1/1. Catalyzes the reversible conversion of ribose-5-phosphate to ribulose 5-phosphate. This Afipia carboxidovorans (strain ATCC 49405 / DSM 1227 / KCTC 32145 / OM5) (Oligotropha carboxidovorans) protein is Ribose-5-phosphate isomerase A.